The primary structure comprises 234 residues: Large ribosomal subunit protein uL1 (234 aa).

This sequence belongs to the universal ribosomal protein uL1 family. Part of the 50S ribosomal subunit.

Its function is as follows. Binds directly to 23S rRNA. The L1 stalk is quite mobile in the ribosome, and is involved in E site tRNA release. In terms of biological role, protein L1 is also a translational repressor protein, it controls the translation of the L11 operon by binding to its mRNA. The polypeptide is Large ribosomal subunit protein uL1 (Cronobacter sakazakii (strain ATCC BAA-894) (Enterobacter sakazakii)).